The chain runs to 904 residues: MAAIRALQQWCRQQCEGYRDVNICNMTTSFRDGLAFCAILHRHRPDLINFSALKKENIYENNKLAFRVAEEHLGIPALLDAEDMVALKVPDRLSILTYVSQYYNYFHGRSPIGGMAGVKRASEDSEEEPSGKKAPVQAAKLPSPAPARKPPLSPAQTNPVVQRRNEGAGGPPPKTDQALAGSLVSSTCGVCGKHVHLVQRHLADGRLYHRSCFRCKQCSCTLHSGAYKATGEPGTFVCTSHLPAAASASPKLTGLVPRQPGAMGVDSRTSCSPQKAQEANKARPSAWEPAAGNSPARASVPAAPNPAATSATSVHVRSPARPSESRLAPTPTEGKVRPRVTNSSPMGWSSAAPCTAAAASHPAVPPSAPDPRPATPQGGGAPRVAAPQTTLSSSSTSAATVDPPAWTPSASRTQQARNKFFQTSAVPPGTSLSGRGPTPSLVLSKDSSKEQARNFLKQALSALEEAGAPAPGRPSPATAAVPSSQPKTEAPQASPLAKPLQSSSPRVLGLPSRMEPPAPLSTSSTSQASALPPAGRRNLAESSGVGRVGAGSRPKPEAPMAKGKSTTLTQDMSTSLQEGQEDGPAGWRANLKPVDRRSPAERTLKPKEPRALAEPRAGEAPRKVSGSFAGSVHITLTPVRPDRTPRPASPGPSLPARSPSPPRRRRLAVPASLDVCDNWLRPEPPGQEARVQSWKEEEKKPHLQGKPGRPLSPANVPALPGETVTSPVRLHPDYLSPEEIQRQLQDIERRLDALELRGVELEKRLRAAEGDDAEDSLMVDWFWLIHEKQLLLRQESELMYKSKAQRLEEQQLDIEGELRRLMAKPEALKSLQERRREQELLEQYVSTVNDRSDIVDSLDEDRLREQEEDQMLRDMIEKLGLQRKKSKFRLSKIWSPKSKSSPSQ.

The region spanning 1-107 (MAAIRALQQW…YVSQYYNYFH (107 aa)) is the Calponin-homology (CH) domain. The forms an intramolecular interaction with the C-terminal coiled coil domain keeping the protein in a closed conformation stretch occupies residues 1–260 (MAAIRALQQW…KLTGLVPRQP (260 aa)). Phosphoserine occurs at positions 110, 143, and 153. A disordered region spans residues 117–178 (GVKRASEDSE…GGPPPKTDQA (62 aa)). Residues 143–153 (SPAPARKPPLS) show a composition bias toward pro residues. The 63-residue stretch at 186 to 248 (STCGVCGKHV…TSHLPAAASA (63 aa)) folds into the LIM zinc-binding domain. S249 carries the phosphoserine modification. The interval 251 to 722 (KLTGLVPRQP…PANVPALPGE (472 aa)) is disordered. The tract at residues 261–388 (GAMGVDSRTS…GGAPRVAAPQ (128 aa)) is necessary and sufficient for interaction with actinins. A mediates targeting to the cell plasma membrane region spans residues 261–697 (GAMGVDSRTS…EARVQSWKEE (437 aa)). Polar residues predominate over residues 267–277 (SRTSCSPQKAQ). Composition is skewed to low complexity over residues 293-314 (NSPA…ATSV) and 349-362 (SSAA…ASHP). Residue S294 is modified to Phosphoserine. Residues 363–374 (AVPPSAPDPRPA) are compositionally biased toward pro residues. The span at 385–400 (AAPQTTLSSSSTSAAT) shows a compositional bias: low complexity. Polar residues predominate over residues 408-433 (PSASRTQQARNKFFQTSAVPPGTSLS). Low complexity predominate over residues 459–480 (ALSALEEAGAPAPGRPSPATAA). Residues S494 and S504 each carry the phosphoserine modification. Composition is skewed to low complexity over residues 520 to 534 (LSTS…LPPA) and 542 to 553 (SSGVGRVGAGSR). A compositionally biased stretch (polar residues) spans 564-578 (KSTTLTQDMSTSLQE). Residues 593–622 (PVDRRSPAERTLKPKEPRALAEPRAGEAPR) show a composition bias toward basic and acidic residues. S598 carries the phosphoserine modification. T644 is modified (phosphothreonine). Residues 647–661 (PASPGPSLPARSPSP) show a composition bias toward pro residues. Phosphoserine is present on residues S649, S658, S660, and S726. The interval 698-807 (EKKPHLQGKP…LMYKSKAQRL (110 aa)) is forms an intramolecular interaction with the N-terminal Calponin-homology and LIM zinc-binding domains-containing region keeping the protein in a closed conformation. In terms of domain architecture, bMERB spans 723–874 (TVTSPVRLHP…EQEEDQMLRD (152 aa)). The stretch at 735-771 (LSPEEIQRQLQDIERRLDALELRGVELEKRLRAAEGD) forms a coiled coil. Residues 807–903 (LEEQQLDIEG…WSPKSKSSPS (97 aa)) form a mediates interaction with RAB13 and is required for transition from the closed to the opened conformation region.

As to quaternary structure, interacts with RAB13 (GTP-bound form); competes with RAB8A and is involved in tight junctions assembly. Interacts with RAB8A; competes with RAB13 and is involved in E-cadherin endocytic recycling. Interacts with RAB8B. Interacts (preferentially in opened conformation) with ACTN1 and ACTN4; stimulated by RAB13 activation. Interacts (via calponin-homology (CH) domain) with the filamins FLNA, FLNB and FLNC (via actin-binding domain).

It localises to the cell membrane. The protein localises to the cell junction. It is found in the tight junction. The protein resides in the recycling endosome. Its subcellular location is the cell projection. It localises to the cytoplasm. The protein localises to the cytoskeleton. Functionally, effector of small Rab GTPases which is involved in junctional complexes assembly through the regulation of cell adhesion molecules transport to the plasma membrane and actin cytoskeleton reorganization. Regulates the endocytic recycling of occludins, claudins and E-cadherin to the plasma membrane and may thereby regulate the establishment of tight junctions and adherens junctions. In parallel, may regulate actin cytoskeleton reorganization directly through interaction with F-actin or indirectly through actinins and filamins. Most probably involved in the processes of epithelial cell differentiation, cell spreading and neurite outgrowth. Undergoes liquid-liquid phase separation to form tubular recycling endosomes. Plays 2 sequential roles in the biogenesis of tubular recycling endosomes: first organizes phase separation and then the closed form formed by interaction with RAB8A promotes endosomal tubulation. In Homo sapiens (Human), this protein is MICAL-like protein 2.